We begin with the raw amino-acid sequence, 347 residues long: Protein RecA (347 aa).

64 to 71 is an ATP binding site; sequence GPESSGKT.

The protein belongs to the RecA family.

It localises to the cytoplasm. In terms of biological role, can catalyze the hydrolysis of ATP in the presence of single-stranded DNA, the ATP-dependent uptake of single-stranded DNA by duplex DNA, and the ATP-dependent hybridization of homologous single-stranded DNAs. It interacts with LexA causing its activation and leading to its autocatalytic cleavage. The chain is Protein RecA from Bartonella henselae (strain ATCC 49882 / DSM 28221 / CCUG 30454 / Houston 1) (Rochalimaea henselae).